Consider the following 92-residue polypeptide: UPF0213 protein M28_Spy1146 (92 aa).

The GIY-YIG domain occupies 4-80 (KKAYMYVLEC…KRKTRSQKLA (77 aa)).

This sequence belongs to the UPF0213 family.

The sequence is that of UPF0213 protein M28_Spy1146 from Streptococcus pyogenes serotype M28 (strain MGAS6180).